The following is a 660-amino-acid chain: Acyl-coenzyme A oxidase acox-1.3 (660 aa).

FAD contacts are provided by residues 146-149 (YAQT), 154-155 (GT), and glycine 188. Substrate-binding positions include 282-285 (KIGY) and arginine 292. FAD contacts are provided by residues arginine 317 and 337-340 (QQHR). The ATP site is built by histidine 339, serine 389, histidine 393, and glutamine 401. 430 to 431 (YE) is a substrate binding site. Glutamate 431 serves as the catalytic Proton acceptor. An FAD-binding site is contributed by glutamate 433. ATP contacts are provided by residues 524-527 (RASR) and tyrosine 572. The Microbody targeting signal signature appears at 658-660 (AKL).

This sequence belongs to the acyl-CoA oxidase family. As to quaternary structure, forms a heterodimer with acox-1.1; the interaction may be important for the stability of acox-1.3. FAD serves as cofactor.

The protein localises to the peroxisome. The enzyme catalyses asc-C7-CoA + O2 = asc-DeltaC7-CoA + H2O2. The protein operates within lipid metabolism; peroxisomal fatty acid beta-oxidation. Activated by ATP. ATP binding leads to a conformational change that promotes FAD cofactor binding and enzyme activity. ATP binding likely occurs during acox-1.3 folding and/or dimer formation. Its function is as follows. Involved in the first step of peroxisomal beta-oxidation by catalyzing the desaturation of fatty acid-derived side chains of ascaroside pheromones, which regulates development and behavior. Specifically, shortens ascarosides with a 7-carbon side chain (asc-C7). Does not catalyze the desaturation of fatty acids or hydroxylated fatty acids. Involved in the biosynthesis of asc-C6-MK (daumone 2) and asc-delta-C9 (daumone 3) but not asc-C7 (daumone 1); daumones are pheromones produced during unfavourable growth conditions which promote entry into the dauer stage. The chain is Acyl-coenzyme A oxidase acox-1.3 from Caenorhabditis elegans.